A 554-amino-acid chain; its full sequence is MMLSRAKPAVGRGVQPTDKKKKKGRKIPKLEELLSKRDFTGAITLLEFKRHVGEEEEDTNLWIGYCAFHLGDYKRALEEYENATKEENCNSEVWVNLACTYFFLGMYKQAEAAGFKASKSRLQNRLLFHLAHKFNDEKKLMSFHQNLQDVTEDQLSLASIHYMRSHYQEAIDIYKRILLDNREYLALNVYVALCYYKLDYYDVSQEVLAVYLQQIPDSTIALNLKACNHFRLYNGRAAEAELKSLMDNASSSFEFAKELIRHNLVVFRGGEGALQVLPPLVDVIPEARLNLVIYYLRQDDVQEAYNLIKDLEPTTPQEYILKGVVNAALGQEMGSRDHMKIAQQFFQLVGGSASECDTIPGRQCMASCFFLLKQFDDVLIYLNSFKSYFYNDDIFNFNYAQAKAATGNTSEGEEAFLLIQSEKMKNDYIYLSWLARCYIMNKKPRLAWELYLKMETSGESFSLLQLIANDCYKMGQFYYSAKAFDVLERLDPNPEYWEGKRGACVGIFQMIVAGREPKETLREVLHLLRSTGNTQVEYMIRIMKKWAKENRVPI.

A disordered region spans residues 1–26; that stretch reads MMLSRAKPAVGRGVQPTDKKKKKGRK. TPR repeat units follow at residues 57-90, 92-125, 151-184, and 468-501; these read EDTNLWIGYCAFHLGDYKRALEEYENATKEENCN, EVWVNLACTYFFLGMYKQAEAAGFKASKSRLQNR, TEDQLSLASIHYMRSHYQEAIDIYKRILLDNREY, and ANDCYKMGQFYYSAKAFDVLERLDPNPEYWEGKR.

It belongs to the IFT56 family. As to quaternary structure, component of the IFT complex B. Interacts with IFT46; the interaction is direct.

The protein resides in the cell projection. Its subcellular location is the cilium. In terms of biological role, component of the intraflagellar transport (IFT) complex B required for transport of proteins in the motile cilium. Required for transport of specific ciliary cargo proteins related to motility, while it is neither required for IFT complex B assembly or motion nor for cilium assembly. Required for efficient coupling between the accumulation of GLI2 and GLI3 at the ciliary tips and their dissociation from the negative regulator SUFU. Plays a key role in maintaining the integrity of the IFT complex B and the proper ciliary localization of the IFT complex B components. Not required for IFT complex A ciliary localization or function. Essential for maintaining proper microtubule organization within the ciliary axoneme. The chain is Intraflagellar transport protein 56 (IFT56) from Macaca fascicularis (Crab-eating macaque).